Reading from the N-terminus, the 115-residue chain is T cell receptor delta variable 2 (115 aa).

Residues Met1–Ser19 form the signal peptide. Residues Pro25–Thr115 form the Ig-like domain. Cys42 and Cys111 are joined by a disulfide.

Gamma-delta TR is a heterodimer composed of a gamma and delta chain; disulfide-linked. The gamma-delta TR is associated with the transmembrane signaling CD3 coreceptor proteins following the stoichiometry: a single gamma-delta TR heterodimer associates with one CD3D-CD3E heterodimer, one CD3G-CD3E heterodimer and one CD247 homodimer forming a stable octameric structure. Upon activation, gamma-delta TR complex associates with FCER1G to initiate intracellular signaling.

It localises to the cell membrane. Its function is as follows. V region of the variable domain of T cell receptor (TR) delta chain that participates in the antigen recognition. Gamma-delta TRs recognize a variety of self and foreign non-peptide antigens frequently expressed at the epithelial boundaries between the host and external environment, including endogenous lipids presented by MH-like protein CD1D and phosphoantigens presented by butyrophilin-like molecule BTN3A1. Upon antigen recognition induces rapid, innate-like immune responses involved in pathogen clearance and tissue repair. Binding of gamma-delta TR complex to antigen triggers phosphorylation of immunoreceptor tyrosine-based activation motifs (ITAMs) in the CD3 chains by the LCK and FYN kinases, allowing the recruitment, phosphorylation, and activation of ZAP70 that facilitates phosphorylation of the scaffolding proteins LCP2 and LAT. This lead to the formation of a supramolecular signalosome that recruits the phospholipase PLCG1, resulting in calcium mobilization and ERK activation, ultimately leading to T cell expansion and differentiation into effector cells. Gamma-delta TRs are produced through somatic rearrangement of a limited repertoire of variable (V), diversity (D), and joining (J) genes. The potential diversity of gamma-delta TRs is conferred by the unique ability to rearrange (D) genes in tandem and to utilize all three reading frames. The combinatorial diversity is considerably increased by the sequence exonuclease trimming and random nucleotide (N) region additions which occur during the V-(D)-J rearrangements. The sequence is that of T cell receptor delta variable 2 from Homo sapiens (Human).